The chain runs to 251 residues: Hydroxyacylglutathione hydrolase (251 aa).

Residues His53, His55, Asp57, His58, His110, Asp127, and His165 each contribute to the Zn(2+) site.

Belongs to the metallo-beta-lactamase superfamily. Glyoxalase II family. In terms of assembly, monomer. Requires Zn(2+) as cofactor.

The catalysed reaction is an S-(2-hydroxyacyl)glutathione + H2O = a 2-hydroxy carboxylate + glutathione + H(+). It participates in secondary metabolite metabolism; methylglyoxal degradation; (R)-lactate from methylglyoxal: step 2/2. In terms of biological role, thiolesterase that catalyzes the hydrolysis of S-D-lactoyl-glutathione to form glutathione and D-lactic acid. This chain is Hydroxyacylglutathione hydrolase, found in Pectobacterium carotovorum subsp. carotovorum (strain PC1).